The primary structure comprises 100 residues: MASSSMSSQSSGSWTAKQNKAFEQALATYDQDTPNRWQNVAKVVGGKTTEEVKRHYELLVQDINSIENGHVPFPNYRTSGGCTNGRLSQEEKRMRNMRLQ.

The SANT domain occupies 9–64; sequence QSSGSWTAKQNKAFEQALATYDQDTPNRWQNVAKVVGGKTTEEVKRHYELLVQDIN. Residues 73-100 form a disordered region; the sequence is FPNYRTSGGCTNGRLSQEEKRMRNMRLQ. Positions 76–87 are enriched in polar residues; that stretch reads YRTSGGCTNGRL.

It localises to the nucleus. Functionally, probable transcription factor. This chain is Protein RADIALIS-like 1 (RL1), found in Arabidopsis thaliana (Mouse-ear cress).